A 285-amino-acid polypeptide reads, in one-letter code: Probable xyloglucan endotransglucosylase/hydrolase protein 12 (285 aa).

A signal peptide spans 1 to 25 (MAAFATKQSPLLLASLLILIGVATG). The GH16 domain occupies 26-215 (SFYDSFDITW…WTNAPFSASY (190 aa)). E101 (nucleophile) is an active-site residue. The Proton donor role is filled by E105. E105 contacts xyloglucan. N-linked (GlcNAc...) asparagine glycosylation occurs at N109. Xyloglucan is bound by residues 118–120 (HTN), 128–130 (NRE), 194–195 (DW), and G199. 2 cysteine pairs are disulfide-bonded: C224-C235 and C268-C282. R273 lines the xyloglucan pocket.

The protein belongs to the glycosyl hydrolase 16 family. XTH group 2 subfamily. Contains at least one intrachain disulfide bond essential for its enzymatic activity. In terms of tissue distribution, root specific.

The protein localises to the secreted. The protein resides in the cell wall. It is found in the extracellular space. Its subcellular location is the apoplast. It catalyses the reaction breaks a beta-(1-&gt;4) bond in the backbone of a xyloglucan and transfers the xyloglucanyl segment on to O-4 of the non-reducing terminal glucose residue of an acceptor, which can be a xyloglucan or an oligosaccharide of xyloglucan.. In terms of biological role, catalyzes xyloglucan endohydrolysis (XEH) and/or endotransglycosylation (XET). Cleaves and religates xyloglucan polymers, an essential constituent of the primary cell wall, and thereby participates in cell wall construction of growing tissues. This chain is Probable xyloglucan endotransglucosylase/hydrolase protein 12 (XTH12), found in Arabidopsis thaliana (Mouse-ear cress).